The primary structure comprises 384 residues: PqqA peptide cyclase (384 aa).

One can recognise a Radical SAM core domain in the interval 5–220 (VGLPLWLLAE…TNEYREKLKA (216 aa)). [4Fe-4S] cluster-binding residues include C19, C23, and C26.

Belongs to the radical SAM superfamily. PqqE family. As to quaternary structure, interacts with PqqD. The interaction is necessary for activity of PqqE. Requires [4Fe-4S] cluster as cofactor.

It catalyses the reaction [PQQ precursor protein] + S-adenosyl-L-methionine = E-Y cross-linked-[PQQ precursor protein] + 5'-deoxyadenosine + L-methionine + H(+). It functions in the pathway cofactor biosynthesis; pyrroloquinoline quinone biosynthesis. Its function is as follows. Catalyzes the cross-linking of a glutamate residue and a tyrosine residue in the PqqA protein as part of the biosynthesis of pyrroloquinoline quinone (PQQ). The sequence is that of PqqA peptide cyclase from Acinetobacter baumannii (strain ACICU).